Consider the following 480-residue polypeptide: Gasdermin-C2 (480 aa).

Residues 1 to 226 (MGYSFDRASK…TCVILPSATK (226 aa)) are triggers pyroptosis.

This sequence belongs to the gasdermin family. Homooligomer; homooligomeric ring-shaped pore complex containing 27-28 subunits when inserted in the membrane. In terms of processing, cleavage by CASP8 relieves autoinhibition by releasing the N-terminal moiety (Gasdermin-C2, N-terminal) that initiates pyroptosis. Palmitoylated.

The protein resides in the cytoplasm. Its subcellular location is the cytosol. It is found in the cell membrane. The full-length protein before cleavage is inactive: intramolecular interactions between N- and C-terminal domains mediate autoinhibition in the absence of activation signal. The intrinsic pyroptosis-inducing activity is carried by the released N-terminal moiety (Gasdermin-C2, N-terminal) following cleavage by caspase CASP8 in response to type-2 immunity following worm infection. This form constitutes the precursor of the pore-forming protein: upon cleavage, the released N-terminal moiety (Gasdermin-C2, N-terminal) binds to membranes and forms pores, triggering pyroptosis. Functionally, pore-forming protein that causes membrane permeabilization and pyroptosis in response to type-2 immunity. Produced by the cleavage of gasdermin-C2 in response to type-2 immunity following worm infection. After cleavage, moves to the plasma membrane where it strongly binds to membrane inner leaflet lipids. Homooligomerizes within the membrane and forms pores of 10-15 nanometers (nm) of inner diameter, triggering pyroptosis and lytic cell death in enterocytes. The chain is Gasdermin-C2 from Mus musculus (Mouse).